The primary structure comprises 80 residues: Exodeoxyribonuclease 7 small subunit (80 aa).

This sequence belongs to the XseB family. As to quaternary structure, heterooligomer composed of large and small subunits.

Its subcellular location is the cytoplasm. The catalysed reaction is Exonucleolytic cleavage in either 5'- to 3'- or 3'- to 5'-direction to yield nucleoside 5'-phosphates.. In terms of biological role, bidirectionally degrades single-stranded DNA into large acid-insoluble oligonucleotides, which are then degraded further into small acid-soluble oligonucleotides. This chain is Exodeoxyribonuclease 7 small subunit, found in Vibrio vulnificus (strain CMCP6).